We begin with the raw amino-acid sequence, 368 residues long: 3-dehydroquinate synthase (368 aa).

NAD(+)-binding positions include 71–76 (DGEAAK), 105–109 (GATTD), 129–130 (TT), K142, and K151. Residues E184, H247, and H263 each contribute to the Zn(2+) site.

This sequence belongs to the sugar phosphate cyclases superfamily. Dehydroquinate synthase family. It depends on Co(2+) as a cofactor. The cofactor is Zn(2+). NAD(+) serves as cofactor.

It localises to the cytoplasm. It catalyses the reaction 7-phospho-2-dehydro-3-deoxy-D-arabino-heptonate = 3-dehydroquinate + phosphate. It participates in metabolic intermediate biosynthesis; chorismate biosynthesis; chorismate from D-erythrose 4-phosphate and phosphoenolpyruvate: step 2/7. Catalyzes the conversion of 3-deoxy-D-arabino-heptulosonate 7-phosphate (DAHP) to dehydroquinate (DHQ). This chain is 3-dehydroquinate synthase, found in Thermobifida fusca (strain YX).